A 308-amino-acid polypeptide reads, in one-letter code: Ribosomal RNA small subunit methyltransferase H (308 aa).

S-adenosyl-L-methionine contacts are provided by residues 36–38, D55, F86, D103, and Q110; that span reads GGH.

The protein belongs to the methyltransferase superfamily. RsmH family.

The protein localises to the cytoplasm. It catalyses the reaction cytidine(1402) in 16S rRNA + S-adenosyl-L-methionine = N(4)-methylcytidine(1402) in 16S rRNA + S-adenosyl-L-homocysteine + H(+). In terms of biological role, specifically methylates the N4 position of cytidine in position 1402 (C1402) of 16S rRNA. This chain is Ribosomal RNA small subunit methyltransferase H, found in Helicobacter pylori (strain G27).